The primary structure comprises 92 residues: CRISPR-associated endoribonuclease Cas2 3 (92 aa).

Mg(2+) is bound at residue Asp9.

Belongs to the CRISPR-associated endoribonuclease Cas2 protein family. In terms of assembly, homodimer, forms a heterotetramer with a Cas1 homodimer. Requires Mg(2+) as cofactor.

Functionally, CRISPR (clustered regularly interspaced short palindromic repeat), is an adaptive immune system that provides protection against mobile genetic elements (viruses, transposable elements and conjugative plasmids). CRISPR clusters contain sequences complementary to antecedent mobile elements and target invading nucleic acids. CRISPR clusters are transcribed and processed into CRISPR RNA (crRNA). Functions as a ssRNA-specific endoribonuclease. Involved in the integration of spacer DNA into the CRISPR cassette. The chain is CRISPR-associated endoribonuclease Cas2 3 from Synechocystis sp. (strain ATCC 27184 / PCC 6803 / Kazusa).